The primary structure comprises 66 residues: Conotoxin Ca5.2 (66 aa).

The N-terminal stretch at 1 to 22 is a signal peptide; the sequence is MRCVPVFLILLGLIASAPSVDA. A propeptide spanning residues 23 to 48 is cleaved from the precursor; the sequence is RPQTKDDALASFHDSAKRHLQRLVNA. Residue Phe-62 is modified to Phenylalanine amide.

It belongs to the conotoxin T superfamily. Contains 2 disulfide bonds that can be either 'C1-C3, C2-C4' or 'C1-C4, C2-C3', since these disulfide connectivities have been observed for conotoxins with cysteine framework V (for examples, see AC P0DQQ7 and AC P81755). Expressed by the venom duct.

It is found in the secreted. The polypeptide is Conotoxin Ca5.2 (Conus caracteristicus (Characteristic cone)).